Here is a 184-residue protein sequence, read N- to C-terminus: Adenine phosphoribosyltransferase (184 aa).

Belongs to the purine/pyrimidine phosphoribosyltransferase family. In terms of assembly, homodimer.

The protein resides in the cytoplasm. The enzyme catalyses AMP + diphosphate = 5-phospho-alpha-D-ribose 1-diphosphate + adenine. The protein operates within purine metabolism; AMP biosynthesis via salvage pathway; AMP from adenine: step 1/1. Catalyzes a salvage reaction resulting in the formation of AMP, that is energically less costly than de novo synthesis. This chain is Adenine phosphoribosyltransferase, found in Parafrankia sp. (strain EAN1pec).